The primary structure comprises 397 residues: (S)-8-oxocitronellyl enol synthase ISY2 (397 aa).

NADP(+) contacts are provided by residues threonine 36–leucine 38, arginine 64–arginine 65, aspartate 82–valine 83, threonine 106–tryptophan 107, glutamine 144, tyrosine 180, isoleucine 207, and serine 214–methionine 216. The active site involves tyrosine 180.

Belongs to the short-chain dehydrogenases/reductases (SDR) family.

It catalyses the reaction (S)-8-oxocitronellyl enol + NADP(+) = (6E)-8-oxogeranial + NADPH + H(+). It carries out the reaction (S)-8-oxocitronellyl enol + NAD(+) = (6E)-8-oxogeranial + NADH + H(+). Its function is as follows. Iridoid synthase that catalyzes the first step in generation of the iridoid ring scaffold using the linear monoterpene (6E)-8-oxogeranial as substrate. Iridoids comprise a large family of distinctive bicyclic monoterpenes that possess a wide range of pharmacological activities, including anticancer, anti-inflammatory, antifungal and antibacterial activities. Catalyzes the conversion of the linear monoterpene (6E)-8-oxogeranial to (S)-8-oxocitronellyl enol, a precursor of nepetalactones, which are metabolites that are both insect-repellent and have euphoric effect in cats. The protein is (S)-8-oxocitronellyl enol synthase ISY2 of Nepeta cataria (Catnip).